A 215-amino-acid chain; its full sequence is Cytochrome b6 (215 aa).

A helical transmembrane segment spans residues 32 to 52 (IFYCLGGITLTCFIIQVATGF). Cysteine 35 is a heme c binding site. 2 residues coordinate heme b: histidine 86 and histidine 100. Transmembrane regions (helical) follow at residues 90 to 110 (ASMM…TGGF), 116 to 136 (LTWV…VTGY), and 186 to 206 (LHTF…FLMI). Positions 187 and 202 each coordinate heme b.

The protein belongs to the cytochrome b family. PetB subfamily. As to quaternary structure, the 4 large subunits of the cytochrome b6-f complex are cytochrome b6, subunit IV (17 kDa polypeptide, PetD), cytochrome f and the Rieske protein, while the 4 small subunits are PetG, PetL, PetM and PetN. The complex functions as a dimer. Heme b serves as cofactor. It depends on heme c as a cofactor.

The protein resides in the plastid. It is found in the chloroplast thylakoid membrane. Its function is as follows. Component of the cytochrome b6-f complex, which mediates electron transfer between photosystem II (PSII) and photosystem I (PSI), cyclic electron flow around PSI, and state transitions. This Zygnema circumcarinatum (Green alga) protein is Cytochrome b6.